We begin with the raw amino-acid sequence, 194 residues long: Der GTPase-activating protein YihI (194 aa).

A disordered region spans residues 1-87; it reads MSRQKKSRNI…RDPRLGSRKK (87 aa). The segment covering 37–48 has biased composition (basic and acidic residues); sequence TRYELDAKARED.

It belongs to the YihI family. In terms of assembly, interacts with Der.

Functionally, a GTPase-activating protein (GAP) that modifies Der/EngA GTPase function. May play a role in ribosome biogenesis. This chain is Der GTPase-activating protein YihI, found in Mannheimia succiniciproducens (strain KCTC 0769BP / MBEL55E).